We begin with the raw amino-acid sequence, 72 residues long: Putative snRNP Sm-like protein (72 aa).

A Sm domain is found at Arg4–Pro72.

Belongs to the snRNP Sm proteins family.

This chain is Putative snRNP Sm-like protein, found in Methanococcoides burtonii (strain DSM 6242 / NBRC 107633 / OCM 468 / ACE-M).